A 548-amino-acid chain; its full sequence is Probable 2,3-bisphosphoglycerate-independent phosphoglycerate mutase (548 aa).

2 residues coordinate Mn(2+): aspartate 20 and serine 73. The active-site Phosphoserine intermediate is serine 73. Residues histidine 134, 164–165 (RD), arginine 200, arginine 207, 279–282 (RGDR), and lysine 354 contribute to the substrate site. Mn(2+)-binding residues include aspartate 422, histidine 426, aspartate 463, histidine 464, and histidine 493.

This sequence belongs to the BPG-independent phosphoglycerate mutase family. Monomer. The cofactor is Mn(2+).

It catalyses the reaction (2R)-2-phosphoglycerate = (2R)-3-phosphoglycerate. The protein operates within carbohydrate degradation; glycolysis; pyruvate from D-glyceraldehyde 3-phosphate: step 3/5. Catalyzes the interconversion of 2-phosphoglycerate and 3-phosphoglycerate. The polypeptide is Probable 2,3-bisphosphoglycerate-independent phosphoglycerate mutase (gpmI) (Leptospira interrogans serogroup Icterohaemorrhagiae serovar copenhageni (strain Fiocruz L1-130)).